The sequence spans 376 residues: Succinyl-diaminopimelate desuccinylase (376 aa).

His67 contributes to the Zn(2+) binding site. The active site involves Asp69. Zn(2+) is bound at residue Asp100. Glu134 acts as the Proton acceptor in catalysis. The Zn(2+) site is built by Glu135, Glu163, and His349.

Belongs to the peptidase M20A family. DapE subfamily. In terms of assembly, homodimer. Requires Zn(2+) as cofactor. It depends on Co(2+) as a cofactor.

The catalysed reaction is N-succinyl-(2S,6S)-2,6-diaminopimelate + H2O = (2S,6S)-2,6-diaminopimelate + succinate. The protein operates within amino-acid biosynthesis; L-lysine biosynthesis via DAP pathway; LL-2,6-diaminopimelate from (S)-tetrahydrodipicolinate (succinylase route): step 3/3. Its function is as follows. Catalyzes the hydrolysis of N-succinyl-L,L-diaminopimelic acid (SDAP), forming succinate and LL-2,6-diaminopimelate (DAP), an intermediate involved in the bacterial biosynthesis of lysine and meso-diaminopimelic acid, an essential component of bacterial cell walls. The protein is Succinyl-diaminopimelate desuccinylase of Pseudoalteromonas atlantica (strain T6c / ATCC BAA-1087).